The sequence spans 193 residues: NAD(P)H-quinone oxidoreductase subunit I (193 aa).

2 4Fe-4S ferredoxin-type domains span residues 56 to 85 (GRIH…VDWE) and 96 to 125 (KHYS…MTEE). The [4Fe-4S] cluster site is built by Cys-65, Cys-68, Cys-71, Cys-75, Cys-105, Cys-108, Cys-111, and Cys-115. Residues 174-193 (NLPKGSQRAGQHPEDLVKAE) form a disordered region. The span at 184-193 (QHPEDLVKAE) shows a compositional bias: basic and acidic residues.

The protein belongs to the complex I 23 kDa subunit family. NDH-1 is composed of at least 11 different subunits. It depends on [4Fe-4S] cluster as a cofactor.

It is found in the cellular thylakoid membrane. The catalysed reaction is a plastoquinone + NADH + (n+1) H(+)(in) = a plastoquinol + NAD(+) + n H(+)(out). The enzyme catalyses a plastoquinone + NADPH + (n+1) H(+)(in) = a plastoquinol + NADP(+) + n H(+)(out). In terms of biological role, NDH-1 shuttles electrons from an unknown electron donor, via FMN and iron-sulfur (Fe-S) centers, to quinones in the respiratory and/or the photosynthetic chain. The immediate electron acceptor for the enzyme in this species is believed to be plastoquinone. Couples the redox reaction to proton translocation, and thus conserves the redox energy in a proton gradient. This chain is NAD(P)H-quinone oxidoreductase subunit I, found in Synechocystis sp. (strain ATCC 27184 / PCC 6803 / Kazusa).